A 94-amino-acid polypeptide reads, in one-letter code: Integration host factor subunit beta (94 aa).

This sequence belongs to the bacterial histone-like protein family. In terms of assembly, heterodimer of an alpha and a beta chain.

Its function is as follows. This protein is one of the two subunits of integration host factor, a specific DNA-binding protein that functions in genetic recombination as well as in transcriptional and translational control. In Sodalis glossinidius (strain morsitans), this protein is Integration host factor subunit beta.